The primary structure comprises 159 residues: Small ribosomal subunit protein uS9 (159 aa).

This sequence belongs to the universal ribosomal protein uS9 family.

The polypeptide is Small ribosomal subunit protein uS9 (Methylocella silvestris (strain DSM 15510 / CIP 108128 / LMG 27833 / NCIMB 13906 / BL2)).